The following is a 332-amino-acid chain: Olfactory receptor 10G6 (332 aa).

The Extracellular segment spans residues 1–46 (MLEGVEHLLLLLLLTDVNSKELQSGNQTSVSHFILVGLHHPPQLGA). The N-linked (GlcNAc...) asparagine glycan is linked to asparagine 26. A helical transmembrane segment spans residues 47-67 (PLFLAFLVIYLLTVSGNGLII). The Cytoplasmic portion of the chain corresponds to 68 to 75 (LTVLVDIR). A helical transmembrane segment spans residues 76–96 (LHRPMCLFLCHLSFLDMTISC). Over 97–120 (AIVPKMLAGFLLGSRIISFGGCVI) the chain is Extracellular. Residues cysteine 118 and cysteine 210 are joined by a disulfide bond. A helical membrane pass occupies residues 121–141 (QLFSFHFLGCTECFLYTLMAY). Residues 142 to 160 (DRFLAICKPLHYATIMTHR) lie on the Cytoplasmic side of the membrane. A helical transmembrane segment spans residues 161–181 (VCNSLALGTWLGGTIHSLFQT). Residues 182–218 (SFVFRLPFCGPNRVDYIFCDIPAMLRLACADTAINEL) are Extracellular-facing. The helical transmembrane segment at 219-238 (VTFADIGFLALTCFMLILTS) threads the bilayer. Residues 239–258 (YGYIVAAILRIPSADGRRNA) are Cytoplasmic-facing. Residues 259-279 (FSTCAAHLTVVIVYYVPCTFI) form a helical membrane-spanning segment. At 280 to 290 (YLRPCSQEPLD) the chain is on the extracellular side. The helical transmembrane segment at 291–311 (GVVAVFYTVITPLLNSIIYTL) threads the bilayer. The Cytoplasmic segment spans residues 312–332 (CNKEMKAALQRLGGHKEVQPH).

Belongs to the G-protein coupled receptor 1 family.

It is found in the cell membrane. Odorant receptor. The chain is Olfactory receptor 10G6 (OR10G6) from Homo sapiens (Human).